Reading from the N-terminus, the 86-residue chain is Evasin-3 (86 aa).

The signal sequence occupies residues 1-20; it reads MRALLARLLLCVLVVSDSKG. Intrachain disulfides connect Cys42–Cys57, Cys46–Cys59, and Cys53–Cys70. A glycan (N-linked (GlcNAc...) asparagine) is linked at Asn45. The N-linked (GlcNAc...) asparagine glycan is linked to Asn76.

Monomer.

The protein localises to the secreted. Functionally, salivary chemokine-binding protein which shows chemokine neutralizing activity and binds to host chemokines CXCL1, CXCL2, CXCL3, CXCL5, CXCL6 and CXCL8. Binds to CXCL8 with 1:1 stoichiometry. Disrupts CXCL8 homodimer formation, disrupts the glycosaminoglycan-binding site of CXCL8 and inhibits the interaction of CXCL8 with CXCR2. This is Evasin-3 from Rhipicephalus sanguineus (Brown dog tick).